The primary structure comprises 85 residues: UPF0512 protein U (85 aa).

Belongs to the UPF0512 family.

This Dictyostelium discoideum (Social amoeba) protein is UPF0512 protein U.